The following is a 480-amino-acid chain: MTIFEISKEGRIGFQLPDNNIKDYEINLPEHLLRKSLPRLPQVSEVDVVRHYTNLSAKNYSVDVGFYPLGSCTMKYNPKVNEKVASFEEFSMIHPFQPHETVQGALKLMYDLKEMLCEITGMDDMTLIPSAGAHGELTGILISRAYHLSRGDTKRTKVIVPDSAHGTNPASARMAGFDVIEIKSGPDGRVDLNELEKVLDETVAVIMLTNPNTLGLFEKDILKIAQMAHDKGALLYYDGANLNAILGRTRPGDMGFDIVHLNLHKTFSTPHGMGGPGSGPVGVKKHLAKFLPVPEIVKIEDKYTLNYNKPESIGFIRSYFGNFSVMVRAYTYIKTMGKDGLKKAGEMAVLNANYLRVKVSKIMDIAYPGICMHEFVSTCEKLTKETGVKALDIAKRLLDYGIHAPTMYFPLIVHEDFMIEPTETESKDTLDKFAQILEKIFNEARENPELVKGAPYNTPVRRLDDVSASRKPVFKYNFEE.

At lysine 265 the chain carries N6-(pyridoxal phosphate)lysine.

This sequence belongs to the GcvP family. C-terminal subunit subfamily. In terms of assembly, the glycine cleavage system is composed of four proteins: P, T, L and H. In this organism, the P 'protein' is a heterodimer of two subunits. The cofactor is pyridoxal 5'-phosphate.

The catalysed reaction is N(6)-[(R)-lipoyl]-L-lysyl-[glycine-cleavage complex H protein] + glycine + H(+) = N(6)-[(R)-S(8)-aminomethyldihydrolipoyl]-L-lysyl-[glycine-cleavage complex H protein] + CO2. Its function is as follows. The glycine cleavage system catalyzes the degradation of glycine. The P protein binds the alpha-amino group of glycine through its pyridoxal phosphate cofactor; CO(2) is released and the remaining methylamine moiety is then transferred to the lipoamide cofactor of the H protein. This Thermosipho africanus (strain TCF52B) protein is Probable glycine dehydrogenase (decarboxylating) subunit 2.